Here is an 879-residue protein sequence, read N- to C-terminus: Pyruvate dehydrogenase phosphatase regulatory subunit, mitochondrial (879 aa).

A mitochondrion-targeting transit peptide spans 1 to 27; sequence MMFYRLLSIVGRQRASPGWQNWSSARN.

It belongs to the GcvT family. As to quaternary structure, heterodimer of a catalytic (PDP1) and a regulatory (PDPR) subunit.

The protein localises to the mitochondrion matrix. Decreases the sensitivity of PDP1 to magnesium ions, and this inhibition is reversed by the polyamine spermine. This is Pyruvate dehydrogenase phosphatase regulatory subunit, mitochondrial (PDPR) from Homo sapiens (Human).